The primary structure comprises 468 residues: 6-phospho-beta-galactosidase (468 aa).

Residues Gln-19, His-116, Asn-159, Glu-160, and Asn-297 each coordinate D-galactose 6-phosphate. Glu-160 acts as the Proton donor in catalysis. The active-site Nucleophile is the Glu-375. 4 residues coordinate D-galactose 6-phosphate: Ser-428, Trp-429, Lys-435, and Tyr-437.

The protein belongs to the glycosyl hydrolase 1 family.

It carries out the reaction a 6-phospho-beta-D-galactoside + H2O = D-galactose 6-phosphate + an alcohol. The protein operates within carbohydrate metabolism; lactose degradation; D-galactose 6-phosphate and beta-D-glucose from lactose 6-phosphate: step 1/1. This chain is 6-phospho-beta-galactosidase, found in Lactococcus lactis subsp. lactis (Streptococcus lactis).